Consider the following 79-residue polypeptide: RNA-binding protein KhpA (79 aa).

A KH domain is found at 32 to 79; sequence FLEYHLNLDQSDVGRVIGRKGRTISAIRTIVYSVPTEYKKVRIVIDEK.

This sequence belongs to the KhpA RNA-binding protein family. As to quaternary structure, forms a complex with KhpB. KhpA and KhpB colocalize throughout the cell cycle, with some increase at midcell in dividing cells.

The protein localises to the cytoplasm. Functionally, a probable RNA chaperone. Forms a complex with KhpB which presumably binds to about 170 cellular RNAs (mRNA, tRNA intergenic RNA and sRNAs); the proteins alone each bind the same set of RNAs. A mutation in this gene suppresses the requirement for PBP2b (penA, a transpeptidase) in peripheral peptidoglycan (PG) synthesis. Probably plays a role in PG homeostasis and regulating peripheral PG synthesis. The polypeptide is RNA-binding protein KhpA (Streptococcus pneumoniae serotype 2 (strain D39 / NCTC 7466)).